The sequence spans 165 residues: Large ribosomal subunit protein uL22c (165 aa).

This sequence belongs to the universal ribosomal protein uL22 family. In terms of assembly, part of the 50S ribosomal subunit.

Its subcellular location is the plastid. It localises to the chloroplast. In terms of biological role, this protein binds specifically to 23S rRNA. Its function is as follows. The globular domain of the protein is located near the polypeptide exit tunnel on the outside of the subunit, while an extended beta-hairpin is found that lines the wall of the exit tunnel in the center of the 70S ribosome. The sequence is that of Large ribosomal subunit protein uL22c (rpl22) from Daucus carota (Wild carrot).